A 339-amino-acid chain; its full sequence is Glycerol-3-phosphate dehydrogenase [NAD(P)+] (339 aa).

Positions 15, 16, 36, and 110 each coordinate NADPH. Positions 110, 139, and 141 each coordinate sn-glycerol 3-phosphate. Ala-143 is an NADPH binding site. 5 residues coordinate sn-glycerol 3-phosphate: Lys-195, Asp-248, Ser-258, Arg-259, and Asn-260. Catalysis depends on Lys-195, which acts as the Proton acceptor. Arg-259 is an NADPH binding site. Positions 283 and 285 each coordinate NADPH.

Belongs to the NAD-dependent glycerol-3-phosphate dehydrogenase family.

It localises to the cytoplasm. It carries out the reaction sn-glycerol 3-phosphate + NAD(+) = dihydroxyacetone phosphate + NADH + H(+). The enzyme catalyses sn-glycerol 3-phosphate + NADP(+) = dihydroxyacetone phosphate + NADPH + H(+). It participates in membrane lipid metabolism; glycerophospholipid metabolism. In terms of biological role, catalyzes the reduction of the glycolytic intermediate dihydroxyacetone phosphate (DHAP) to sn-glycerol 3-phosphate (G3P), the key precursor for phospholipid synthesis. This Shigella boydii serotype 18 (strain CDC 3083-94 / BS512) protein is Glycerol-3-phosphate dehydrogenase [NAD(P)+].